Consider the following 176-residue polypeptide: Probable inosine/xanthosine triphosphatase (176 aa).

D36 contributes to the Mg(2+) binding site.

Belongs to the YjjX NTPase family. Homodimer. Requires Mg(2+) as cofactor. Mn(2+) serves as cofactor.

The enzyme catalyses XTP + H2O = XDP + phosphate + H(+). It carries out the reaction ITP + H2O = IDP + phosphate + H(+). Its function is as follows. Phosphatase that hydrolyzes non-canonical purine nucleotides such as XTP and ITP to their respective diphosphate derivatives. Probably excludes non-canonical purines from DNA/RNA precursor pool, thus preventing their incorporation into DNA/RNA and avoiding chromosomal lesions. The sequence is that of Probable inosine/xanthosine triphosphatase from Saccharolobus solfataricus (strain ATCC 35092 / DSM 1617 / JCM 11322 / P2) (Sulfolobus solfataricus).